Here is a 487-residue protein sequence, read N- to C-terminus: Photosystem II CP43 reaction center protein (487 aa).

The propeptide occupies 1 to 28 (MKVFVLGWLLKINLMKTLYSQRRFYHVE). A run of 5 helical transmembrane segments spans residues 83-107 (LFEV…PHLA), 148-169 (LIGP…RDKN), 192-214 (KSLF…RFVS), 269-289 (KPFA…LSYS), and 305-326 (WYNN…ASQA). [CaMn4O5] cluster is bound at residue glutamate 381. Residues 461 to 485 (RARAAAAGFEKGINRENEPVLSMRP) traverse the membrane as a helical segment.

It belongs to the PsbB/PsbC family. PsbC subfamily. In terms of assembly, PSII is composed of 1 copy each of membrane proteins PsbA, PsbB, PsbC, PsbD, PsbE, PsbF, PsbH, PsbI, PsbJ, PsbK, PsbL, PsbM, PsbT, PsbX, PsbY, PsbZ, Psb30/Ycf12, at least 3 peripheral proteins of the oxygen-evolving complex and a large number of cofactors. It forms dimeric complexes. Requires Binds multiple chlorophylls and provides some of the ligands for the Ca-4Mn-5O cluster of the oxygen-evolving complex. It may also provide a ligand for a Cl- that is required for oxygen evolution. PSII binds additional chlorophylls, carotenoids and specific lipids. as cofactor.

The protein resides in the plastid. It localises to the chloroplast thylakoid membrane. Its function is as follows. One of the components of the core complex of photosystem II (PSII). It binds chlorophyll and helps catalyze the primary light-induced photochemical processes of PSII. PSII is a light-driven water:plastoquinone oxidoreductase, using light energy to abstract electrons from H(2)O, generating O(2) and a proton gradient subsequently used for ATP formation. This chain is Photosystem II CP43 reaction center protein, found in Porphyra purpurea (Red seaweed).